A 183-amino-acid polypeptide reads, in one-letter code: TATA-box-binding protein 1 (183 aa).

A run of 2 repeats spans residues 8–84 (IENV…AKKL) and 99–177 (VQNI…RQQL).

It belongs to the TBP family.

General factor that plays a role in the activation of archaeal genes transcribed by RNA polymerase. Binds specifically to the TATA box promoter element which lies close to the position of transcription initiation. This is TATA-box-binding protein 1 from Methanosarcina acetivorans (strain ATCC 35395 / DSM 2834 / JCM 12185 / C2A).